A 212-amino-acid polypeptide reads, in one-letter code: MAKTALTPPASGSEVPRSGTPGDASGNKPQTDATGVSATDTASQKRGRGRPPKAKSDSSQIGAVSAKASTKPSGRPKRNVAQAVPSTSVAAAVKKRGRAKRSTVTAAVVTTATGEGSRKRGRPKKDDVAAATVPAETVVAPAKRRGRKPTVEVAAQPVRRTRKSTSVAPVAANVGDLKKRTALLQKKVKEAAAKLKQAVTAIDEVQKLADGM.

A disordered region spans residues 1–130 (MAKTALTPPA…GRPKKDDVAA (130 aa)). The segment covering 27-44 (NKPQTDATGVSATDTASQ) has biased composition (polar residues). 3 consecutive DNA-binding regions (a.T hook) follow at residues 45-56 (KRGRGRPPKAKS), 70-79 (TKPSGRPKRN), and 94-98 (KKRGR). The segment covering 57–72 (DSSQIGAVSAKASTKP) has biased composition (polar residues). Positions 103 to 113 (TVTAAVVTTAT) are enriched in low complexity. Residues 118 to 127 (RKRGRPKKDD) constitute a DNA-binding region (a.T hook 4). The stretch at 176 to 210 (DLKKRTALLQKKVKEAAAKLKQAVTAIDEVQKLAD) forms a coiled coil.

It localises to the nucleus. In terms of biological role, may bind DNA. In Arabidopsis thaliana (Mouse-ear cress), this protein is Putative DNA-binding protein At1g48610.